The primary structure comprises 183 residues: Peptide deformylase (183 aa).

Cys-111 and His-154 together coordinate Fe cation. Glu-155 is an active-site residue. His-158 provides a ligand contact to Fe cation.

This sequence belongs to the polypeptide deformylase family. The cofactor is Fe(2+).

The catalysed reaction is N-terminal N-formyl-L-methionyl-[peptide] + H2O = N-terminal L-methionyl-[peptide] + formate. In terms of biological role, removes the formyl group from the N-terminal Met of newly synthesized proteins. Requires at least a dipeptide for an efficient rate of reaction. N-terminal L-methionine is a prerequisite for activity but the enzyme has broad specificity at other positions. In Staphylococcus epidermidis (strain ATCC 35984 / DSM 28319 / BCRC 17069 / CCUG 31568 / BM 3577 / RP62A), this protein is Peptide deformylase.